Here is a 410-residue protein sequence, read N- to C-terminus: Transcription factor Dp-1 (410 aa).

K3 is modified (N6-acetyllysine). S23 is subject to Phosphoserine; by CDK2. Positions 77–114 (VVGSPHTPNTHFVSQNQPSDPSPWSAGKRNRKGEKNGK) are disordered. Over residues 82-95 (HTPNTHFVSQNQPS) the composition is skewed to polar residues. A compositionally biased stretch (basic residues) spans 104 to 114 (KRNRKGEKNGK). Positions 105–127 (RNRKGEKNGKGLRHFSMKVCEKV) are interaction with CEBPA. Residues 113 to 195 (GKGLRHFSMK…KKEIKWIGLP (83 aa)) mediate DNA binding. Residues 161–195 (DQKNIRRRVYDALNVLMAMNIISKEKKEIKWIGLP) carry the DEF box motif. A dimerization region spans residues 204–277 (SLEVERQRRL…KKTVIDCSIS (74 aa)). Residues 211 to 327 (RRLERIKQKQ…DLRVARSLVP (117 aa)) are enhances binding of RB protein to E2F. A DCB1 region spans residues 214-246 (ERIKQKQSQLQELILQQIAFKNLVQRNRQVEQQ). Positions 259–315 (LPFIIVNTSKKTVIDCSISNDKFEYLFNFDNTFEIHDDIEVLKRMGMACGLESGSCS) are DCB2. The tract at residues 370–410 (GALATSSSGSQYSGSRVETPVSCVGEDDEDDEDFNENEEED) is disordered. The segment covering 375–384 (SSSGSQYSGS) has biased composition (low complexity). A compositionally biased stretch (acidic residues) spans 394–410 (GEDDEDDEDFNENEEED).

This sequence belongs to the E2F/DP family. In terms of assembly, component of the E2F:DP transcription factor complex. Forms heterodimers with E2F family members. The complex can interact with hypophosphorylated retinoblastoma protein RB1 and related proteins (RBL1 and RBL2) that inhibit the E2F transactivation domain. This repression involves recruitment of histone deacetylase (HDAC). During the cell cycle, from mid-to-late G1 phase, RB family members become phosphorylated, detach from the DRTF1/E2F complex to render E2F transcriptionally active. Part of the E2F6.com-1 complex in G0 phase is composed of E2F6, MGA, MAX, TFDP1, CBX3, BAT8, EUHMTASE1, RING1, RNF2, MBLR, L3MBTL2 YAF2. Component of the DREAM complex (also named LINC complex) at least composed of E2F4, E2F5, LIN9, LIN37, LIN52, LIN54, MYBL1, MYBL2, RBL1, RBL2, RBBP4, TFDP1 and TFDP2. The complex exists in quiescent cells where it represses cell cycle-dependent genes. It dissociates in S phase when LIN9, LIN37, LIN52 and LIN54 form a subcomplex that binds to MYBL2. The complex TFDP1:E2F1 interacts with CEBPA; the interaction prevents CEBPA binding to target gene promoters and represses its transcriptional activity. In terms of processing, ubiquitinated by the BCR(KBTBD5) complex, leading to its subsequent degradation. Phosphorylation by E2F1-bound cyclin A-CDK2, in the S phase, inhibits E2F-mediated DNA binding and transactivation.

The protein resides in the nucleus. Its subcellular location is the cytoplasm. Functionally, can stimulate E2F-dependent transcription. Binds DNA cooperatively with E2F family members through the E2 recognition site, 5'-TTTC[CG]CGC-3', found in the promoter region of a number of genes whose products are involved in cell cycle regulation or in DNA replication. The E2F1:DP complex appears to mediate both cell proliferation and apoptosis. Blocks adipocyte differentiation by repressing CEBPA binding to its target gene promoters. The sequence is that of Transcription factor Dp-1 (TFDP1) from Bos taurus (Bovine).